The primary structure comprises 186 residues: uncharacterized protein (186 aa).

The 181-residue stretch at Met1 to Leu181 folds into the Macro domain.

Belongs to the MacroD-type family.

This is an uncharacterized protein from Thermoplasma volcanium (strain ATCC 51530 / DSM 4299 / JCM 9571 / NBRC 15438 / GSS1).